The primary structure comprises 570 residues: Sulfite reductase [NADPH] hemoprotein beta-component (570 aa).

Residues cysteine 434, cysteine 440, cysteine 479, and cysteine 483 each contribute to the [4Fe-4S] cluster site. Position 483 (cysteine 483) interacts with siroheme.

Belongs to the nitrite and sulfite reductase 4Fe-4S domain family. In terms of assembly, alpha(8)-beta(8). The alpha component is a flavoprotein, the beta component is a hemoprotein. It depends on siroheme as a cofactor. [4Fe-4S] cluster is required as a cofactor.

The catalysed reaction is hydrogen sulfide + 3 NADP(+) + 3 H2O = sulfite + 3 NADPH + 4 H(+). Its pathway is sulfur metabolism; hydrogen sulfide biosynthesis; hydrogen sulfide from sulfite (NADPH route): step 1/1. Functionally, component of the sulfite reductase complex that catalyzes the 6-electron reduction of sulfite to sulfide. This is one of several activities required for the biosynthesis of L-cysteine from sulfate. In Salmonella arizonae (strain ATCC BAA-731 / CDC346-86 / RSK2980), this protein is Sulfite reductase [NADPH] hemoprotein beta-component.